The chain runs to 153 residues: H/ACA ribonucleoprotein complex subunit 2 (153 aa).

Lys-3 participates in a covalent cross-link: Glycyl lysine isopeptide (Lys-Gly) (interchain with G-Cter in SUMO2). A Glycyl lysine isopeptide (Lys-Gly) (interchain with G-Cter in SUMO); alternate cross-link involves residue Lys-5. Lys-5 participates in a covalent cross-link: Glycyl lysine isopeptide (Lys-Gly) (interchain with G-Cter in SUMO1); alternate. A Glycyl lysine isopeptide (Lys-Gly) (interchain with G-Cter in SUMO2); alternate cross-link involves residue Lys-5. Ser-19 is modified (phosphoserine).

This sequence belongs to the eukaryotic ribosomal protein eL8 family. As to quaternary structure, part of the H/ACA small nucleolar ribonucleoprotein (H/ACA snoRNP) complex, which contains NHP2/NOLA2, GAR1/NOLA1, NOP10/NOLA3, and DKC1/NOLA4, which is presumed to be the catalytic subunit. The complex contains a stable core formed by binding of one or two NOP10-DKC1 heterodimers to NHP2; GAR1 subsequently binds to this core via DKC1. The complex binds a box H/ACA small nucleolar RNA (snoRNA), which may target the specific site of modification within the RNA substrate. During assembly, the complex contains NAF1 instead of GAR1/NOLA1. The complex also interacts with TERC, which contains a 3'-terminal domain related to the box H/ACA snoRNAs. Specific interactions with snoRNAs or TERC are mediated by GAR1 and NHP2. Associates with NOLC1/NOPP140. H/ACA snoRNPs interact with the SMN complex, consisting of SMN1 or SMN2, GEMIN2/SIP1, DDX20/GEMIN3, and GEMIN4. This is mediated by interaction between GAR1 and SMN1 or SMN2. The SMN complex may be required for correct assembly of the H/ACA snoRNP complex. Component of the telomerase holoenzyme complex composed of one molecule of TERT, one molecule of WRAP53/TCAB1, two molecules of H/ACA ribonucleoprotein complex subunits DKC1, NOP10, NHP2 and GAR1, and a telomerase RNA template component (TERC). The telomerase holoenzyme complex is associated with TEP1, SMG6/EST1A and POT1.

Its subcellular location is the nucleus. It is found in the nucleolus. It localises to the cajal body. Required for ribosome biogenesis and telomere maintenance. Part of the H/ACA small nucleolar ribonucleoprotein (H/ACA snoRNP) complex, which catalyzes pseudouridylation of rRNA. This involves the isomerization of uridine such that the ribose is subsequently attached to C5, instead of the normal N1. Each rRNA can contain up to 100 pseudouridine ('psi') residues, which may serve to stabilize the conformation of rRNAs. May also be required for correct processing or intranuclear trafficking of TERC, the RNA component of the telomerase reverse transcriptase (TERT) holoenzyme. In Pongo abelii (Sumatran orangutan), this protein is H/ACA ribonucleoprotein complex subunit 2 (NHP2).